Here is a 436-residue protein sequence, read N- to C-terminus: ATP-dependent protease ATPase subunit HslU (436 aa).

Residues Ile-19, 61 to 65 (GVGKT), Asp-249, Glu-314, and Arg-386 contribute to the ATP site.

Belongs to the ClpX chaperone family. HslU subfamily. A double ring-shaped homohexamer of HslV is capped on each side by a ring-shaped HslU homohexamer. The assembly of the HslU/HslV complex is dependent on binding of ATP.

The protein resides in the cytoplasm. In terms of biological role, ATPase subunit of a proteasome-like degradation complex; this subunit has chaperone activity. The binding of ATP and its subsequent hydrolysis by HslU are essential for unfolding of protein substrates subsequently hydrolyzed by HslV. HslU recognizes the N-terminal part of its protein substrates and unfolds these before they are guided to HslV for hydrolysis. The chain is ATP-dependent protease ATPase subunit HslU from Bartonella tribocorum (strain CIP 105476 / IBS 506).